The following is a 305-amino-acid chain: Probable 5-dehydro-4-deoxyglucarate dehydratase (305 aa).

It belongs to the DapA family.

It catalyses the reaction 5-dehydro-4-deoxy-D-glucarate + H(+) = 2,5-dioxopentanoate + CO2 + H2O. It participates in carbohydrate acid metabolism; D-glucarate degradation; 2,5-dioxopentanoate from D-glucarate: step 2/2. The polypeptide is Probable 5-dehydro-4-deoxyglucarate dehydratase (Xanthomonas campestris pv. campestris (strain B100)).